Here is a 308-residue protein sequence, read N- to C-terminus: Probable plastid-lipid-associated protein 9, chloroplastic (308 aa).

A chloroplast-targeting transit peptide spans 1–55 (MALIQHGSVSGTSAVRLSFSSSVSPPSSSPPLSRVSLNFQSEKKSCYRRMICRAM).

Belongs to the PAP/fibrillin family.

The protein resides in the plastid. It is found in the chloroplast. It localises to the plastoglobule. The polypeptide is Probable plastid-lipid-associated protein 9, chloroplastic (PAP9) (Arabidopsis thaliana (Mouse-ear cress)).